The following is an 809-amino-acid chain: Phenylalanine--tRNA ligase beta subunit (809 aa).

The tRNA-binding domain maps to 39–152 (KDKWPNVYVG…ADALVGMLAS (114 aa)). The B5 domain maps to 404–492 (KERNGIVLSL…RIAGYHTIPC (89 aa)). Positions 470, 476, 479, and 480 each coordinate Mg(2+). Positions 717-808 (NRFPAVERDL…LNTETGAVLR (92 aa)) constitute an FDX-ACB domain.

Belongs to the phenylalanyl-tRNA synthetase beta subunit family. Type 1 subfamily. In terms of assembly, tetramer of two alpha and two beta subunits. Mg(2+) is required as a cofactor.

It is found in the cytoplasm. The enzyme catalyses tRNA(Phe) + L-phenylalanine + ATP = L-phenylalanyl-tRNA(Phe) + AMP + diphosphate + H(+). This is Phenylalanine--tRNA ligase beta subunit from Dehalococcoides mccartyi (strain CBDB1).